Reading from the N-terminus, the 207-residue chain is Ras-related protein Rab-5B (207 aa).

The N-myristoyl glycine moiety is linked to residue Gly2. Residues 41 to 49, 60 to 66, 90 to 94, 148 to 151, and 176 to 178 contribute to the GTP site; these read GDSGVGKSS, SEKHQVT, DTGGQ, NKKD, and SAK. The short motif at 63-71 is the Effector region element; sequence HQVTIGAAF.

This sequence belongs to the small GTPase superfamily. Rab family. Interacts with CK1. May interact with ARF1. Myristoylation is required for cell membrane and food vacuole membrane localization. Post-translationally, may be palmitoylated on Cys-3. In terms of processing, lacks the C-terminal cysteine motifs subject to isoprenylation present in mammalian RAB5B homolog.

The protein resides in the cell membrane. It is found in the vacuole membrane. Its subcellular location is the vesicle. The catalysed reaction is GTP + H2O = GDP + phosphate + H(+). Alternates between an inactive GDP-bound form and an active GTP-bound form. Activated by guanine nucleotide-exchange factors (GEFs) and inactivated by GTPase-activating proteins (GAPs). Its function is as follows. Small GTPase which regulates vesicle trafficking between organelles. May be involved in the trafficking of the N-myristoylated AK2 from the endoplasmic reticulum to the parasitophorous vacuole membrane. The chain is Ras-related protein Rab-5B from Plasmodium falciparum (isolate 3D7).